The primary structure comprises 141 residues: 16 kDa protein (141 aa).

The tract at residues 97-119 is disordered; sequence ASATVKKSHKSKPSKKKFKERKD. Basic residues predominate over residues 102-115; that stretch reads KKSHKSKPSKKKFK.

The protein is 16 kDa protein of Beta vulgaris (Sugar beet).